The chain runs to 169 residues: Cytochrome c-type biogenesis protein CcmE (169 aa).

Residues 1-7 lie on the Cytoplasmic side of the membrane; that stretch reads MTRKSRR. The helical; Signal-anchor for type II membrane protein transmembrane segment at 8–28 threads the bilayer; sequence LILIAACGAVLALALGLILSA. Residues 29 to 169 lie on the Periplasmic side of the membrane; sequence MSGSIVFFRS…DATLGQRSER (141 aa). Heme contacts are provided by His122 and Tyr126. Residues 135–169 form a disordered region; the sequence is LKAQGRWQEGGGKEAPKDAAKPASADATLGQRSER. Basic and acidic residues predominate over residues 145–154; the sequence is GGKEAPKDAA.

This sequence belongs to the CcmE/CycJ family.

Its subcellular location is the cell inner membrane. Heme chaperone required for the biogenesis of c-type cytochromes. Transiently binds heme delivered by CcmC and transfers the heme to apo-cytochromes in a process facilitated by CcmF and CcmH. This is Cytochrome c-type biogenesis protein CcmE from Methylorubrum populi (strain ATCC BAA-705 / NCIMB 13946 / BJ001) (Methylobacterium populi).